We begin with the raw amino-acid sequence, 785 residues long: Endonuclease MutS2 (785 aa).

334 to 341 (GPNTGGKT) is an ATP binding site. The region spanning 710–785 (LDLRGQRYDE…GNGATIVKLK (76 aa)) is the Smr domain.

This sequence belongs to the DNA mismatch repair MutS family. MutS2 subfamily. In terms of assembly, homodimer. Binds to stalled ribosomes, contacting rRNA.

In terms of biological role, endonuclease that is involved in the suppression of homologous recombination and thus may have a key role in the control of bacterial genetic diversity. Functionally, acts as a ribosome collision sensor, splitting the ribosome into its 2 subunits. Detects stalled/collided 70S ribosomes which it binds and splits by an ATP-hydrolysis driven conformational change. Acts upstream of the ribosome quality control system (RQC), a ribosome-associated complex that mediates the extraction of incompletely synthesized nascent chains from stalled ribosomes and their subsequent degradation. Probably generates substrates for RQC. This Lactobacillus helveticus (strain DPC 4571) protein is Endonuclease MutS2.